Reading from the N-terminus, the 856-residue chain is Putative zinc protease C28F5.4 (856 aa).

Residue H71 participates in Zn(2+) binding. E74 serves as the catalytic Proton acceptor. H75 and E152 together coordinate Zn(2+).

Belongs to the peptidase M16 family.

The chain is Putative zinc protease C28F5.4 from Caenorhabditis elegans.